The primary structure comprises 577 residues: MRMKDLYAPTLKETPSDVETVSHEYLLRGGFIRKTAAGIYTYLPLGRRVLLKIENIVREEMNRIGAQEILMPILQPAELWKQSGRWDDYGPEMMKLKDRHERDFTLGPTHEEIVTDLVKNELRSYRQLPLVVYQVANKYRDEIRPRFGLLRAREFIMKDAYSFHSSWESLDETYELFKEAYSRIMERLGVKYMVIEAETGAIGGNASHEFVVPAKIGETNVLFCEKCGYQASDEKAEYKGEYTQEQEEEKPFKKVPTPGVKTIEEVSEFLGVPPSKIVKSLLYKGREGYVMVLIRGDLELNEAKLKAHLKDQSLRMATPEEILKDFGVPVGFIGPIGVDVKKVADHSVRGLKNFVVGGMEEDTHYVNANHPRDFKVDEWYDLRTMVEGDPCPVCGEPLKATKGIELGHIFKLGTKYSEAMKAYFMDENGEMKPFIMGCYGWGVSRTMAAVVEHFHDENGMIWPLSIAPYTVVVDILNMNDAEQKQVGEKIYQVLSEKGEEVVLDDREVSPGFKFKDADLIGFPIRINVGRSLKEGVVELKKRYSKELVKVNIKNGFGTLLETLEKMKREYDPKEAAR.

The protein belongs to the class-II aminoacyl-tRNA synthetase family. ProS type 1 subfamily. As to quaternary structure, homodimer.

Its subcellular location is the cytoplasm. It catalyses the reaction tRNA(Pro) + L-proline + ATP = L-prolyl-tRNA(Pro) + AMP + diphosphate. Its function is as follows. Catalyzes the attachment of proline to tRNA(Pro) in a two-step reaction: proline is first activated by ATP to form Pro-AMP and then transferred to the acceptor end of tRNA(Pro). As ProRS can inadvertently accommodate and process non-cognate amino acids such as alanine and cysteine, to avoid such errors it has two additional distinct editing activities against alanine. One activity is designated as 'pretransfer' editing and involves the tRNA(Pro)-independent hydrolysis of activated Ala-AMP. The other activity is designated 'posttransfer' editing and involves deacylation of mischarged Ala-tRNA(Pro). The misacylated Cys-tRNA(Pro) is not edited by ProRS. This is Proline--tRNA ligase from Thermotoga sp. (strain RQ2).